A 2979-amino-acid polypeptide reads, in one-letter code: Polyketide synthase-nonribosomal peptide synthetase TwmB (2979 aa).

One can recognise a Ketosynthase family 3 (KS3) domain in the interval Gly5–Ser435. Catalysis depends on for beta-ketoacyl synthase activity residues Cys176, His315, and His355. The malonyl-CoA:ACP transacylase (MAT) domain stretch occupies residues Val549–Val864. The active-site For malonyltransferase activity is the Ser643. The segment at His936–Ala1070 is N-terminal hotdog fold. Residues His936–Ala1234 are dehydratase (DH) domain. Residues His936–Lys1235 form the PKS/mFAS DH domain. Residue His968 is the Proton acceptor; for dehydratase activity of the active site. Positions Leu1085–Lys1235 are C-terminal hotdog fold. Asp1141 (proton donor; for dehydratase activity) is an active-site residue. The tract at residues Asn1387–Pro1572 is inactive methyltransferase (MT) domain. A ketoreductase (KR)domain region spans residues Thr2098–Val2271. The Carrier domain occupies Arg2380–Ile2465. Ser2425 bears the O-(pantetheine 4'-phosphoryl)serine mark. The segment at Tyr2476–Asp2497 is disordered. A compositionally biased stretch (polar residues) spans Glu2479 to Asp2497. The interval Lys2534–Glu2970 is condensation.

Interacts with TwmE. The cofactor is pantetheine 4'-phosphate.

It catalyses the reaction 5-aminopentanoate + 7 malonyl-CoA + acetyl-CoA + 11 NADPH + 17 H(+) = wortmanamide A + 7 CO2 + 11 NADP(+) + 8 CoA + 6 H2O. The catalysed reaction is 5-aminopentanoate + 8 malonyl-CoA + acetyl-CoA + 13 NADPH + 20 H(+) = wortmanamide B + 8 CO2 + 13 NADP(+) + 9 CoA + 7 H2O. Its pathway is secondary metabolite biosynthesis. Its function is as follows. Polyketide synthase-nonribosomal peptide synthetase; part of the gene cluster that mediates the biosynthesis of wortmanamides A and B, reduced long-chain polyketides amidated with a specific omega-amino acid, 5-aminopentanoic acid (5PA). The PKS modules of TwmB are involved in the synthesis of the polyketide backbone, whereas the non-canonical C domain of TwmB is a bonafide condensation domain that specifically selects 5PA and catalyzes amidation to release polyketide chain. The C domain clearly prefers C16 and C18 fatty acyl substrates, which is consistent with simultaneous formation of both octaketide and nonaketide acyl amides wortmanamides A and B. Because TwmB lacks a designated enoylreductase (ER) domain, the required activity is provided the enoyl reductase TwmE. The roles of the remaining enzymes have still to be clarified. This is Polyketide synthase-nonribosomal peptide synthetase TwmB from Talaromyces wortmannii (Penicillium wortmannii).